The sequence spans 352 residues: Chorismate synthase (352 aa).

NADP(+) contacts are provided by Arg-48 and Arg-54. FMN-binding positions include 125–127, 238–239, Gly-278, 293–297, and Arg-319; these read RSS, NA, and KPTSS.

It belongs to the chorismate synthase family. As to quaternary structure, homotetramer. The cofactor is FMNH2.

It catalyses the reaction 5-O-(1-carboxyvinyl)-3-phosphoshikimate = chorismate + phosphate. The protein operates within metabolic intermediate biosynthesis; chorismate biosynthesis; chorismate from D-erythrose 4-phosphate and phosphoenolpyruvate: step 7/7. Its function is as follows. Catalyzes the anti-1,4-elimination of the C-3 phosphate and the C-6 proR hydrogen from 5-enolpyruvylshikimate-3-phosphate (EPSP) to yield chorismate, which is the branch point compound that serves as the starting substrate for the three terminal pathways of aromatic amino acid biosynthesis. This reaction introduces a second double bond into the aromatic ring system. This is Chorismate synthase from Bordetella petrii (strain ATCC BAA-461 / DSM 12804 / CCUG 43448).